Reading from the N-terminus, the 165-residue chain is Large ribosomal subunit protein uL11 (165 aa).

Residue Ser38 is modified to Phosphoserine. Residue Lys40 forms a Glycyl lysine isopeptide (Lys-Gly) (interchain with G-Cter in SUMO2) linkage. Lys48 participates in a covalent cross-link: Glycyl lysine isopeptide (Lys-Gly) (interchain with G-Cter in ubiquitin). Residue Lys54 is modified to N6-acetyllysine. Lys83 participates in a covalent cross-link: Glycyl lysine isopeptide (Lys-Gly) (interchain with G-Cter in ubiquitin). Position 165 is a phosphoserine (Ser165).

This sequence belongs to the universal ribosomal protein uL11 family. As to quaternary structure, component of the large ribosomal subunit. Mature ribosomes consist of a small (40S) and a large (60S) subunit. The 40S subunit contains about 33 different proteins and 1 molecule of RNA (18S). The 60S subunit contains about 49 different proteins and 3 molecules of RNA (28S, 5.8S and 5S). Post-translationally, ubiquitinated at Lys-48 and Lys-83 by RNF14 and RNF25 in response to ribosome collisions (ribosome stalling).

Its subcellular location is the cytoplasm. Its function is as follows. Component of the large ribosomal subunit. The ribosome is a large ribonucleoprotein complex responsible for the synthesis of proteins in the cell. Binds directly to 26S ribosomal RNA. This is Large ribosomal subunit protein uL11 (RPL12) from Chinchilla lanigera (Long-tailed chinchilla).